We begin with the raw amino-acid sequence, 357 residues long: Dihydroflavonol 4-reductase (357 aa).

Lysine 49 and tyrosine 168 together coordinate NADP(+).

The protein belongs to the NAD(P)-dependent epimerase/dehydratase family. Dihydroflavonol-4-reductase subfamily.

The enzyme catalyses a (2R,3S,4S)-leucoanthocyanidin + NADP(+) = a (2R,3R)-dihydroflavonol + NADPH + H(+). The catalysed reaction is (2S)-flavan-4-ol + NADP(+) = (2S)-flavanone + NADPH + H(+). Its pathway is pigment biosynthesis; anthocyanin biosynthesis. In terms of biological role, bifunctional enzyme involved in flavonoid metabolism. This chain is Dihydroflavonol 4-reductase (A1), found in Zea mays (Maize).